We begin with the raw amino-acid sequence, 426 residues long: MEFQDHFSQEMVLHQQQQQQQQQQNAVLRSMLPESPHHDARKSPPTWLNTSLLRQQHSQFGNASSPSSAAAAAAVAGGNNFLHLQTSNSDSSNSNQWLSPTAAAGGGSNGGGSGHNDELSESMNFAKKMSQQHSGGGEENNNNNNNNNNNNNEEENSWEREKCKADILNHPLYDQLLSAHVSCLRIATPVDQLPRIDAQLAQSQNVVAKYSVLGQGQPPLDDKDLDQFMTHYVLLLSSFKEQLQQHVRVHAMEAVMACWELEQSLQSLTGVAPGEGTGATMSDDDDDQADSDTNFLDGGFDGPDSMGFGPLVPTESERSLMERVRQELKHELKQGYKEKIVDIREEILRKRRAGKLPGDTTSVLKAWWQSHSKWPYPTEEDKARLVQETGLQLKQINNWFINQRKRNWHSNPSTSSSQKSQTQECR.

Disordered regions lie at residues 1 to 26 (MEFQ…QQNA), 85 to 158 (QTSN…ENSW), and 270 to 290 (GVAP…DQAD). Over residues 15 to 24 (QQQQQQQQQQ) the composition is skewed to low complexity. Gly residues predominate over residues 104-114 (AGGGSNGGGSG). Positions 139 to 151 (ENNNNNNNNNNNN) are enriched in low complexity. Residues 327 to 347 (ELKHELKQGYKEKIVDIREEI) form the ELK domain. Positions 348–411 (LRKRRAGKLP…NQRKRNWHSN (64 aa)) form a DNA-binding region, homeobox; TALE-type. Positions 406-426 (RNWHSNPSTSSSQKSQTQECR) are disordered. The segment covering 413–426 (STSSSQKSQTQECR) has biased composition (low complexity).

Belongs to the TALE/KNOX homeobox family. Ubiquitously expressed in the mature plant.

The protein localises to the nucleus. In terms of biological role, may have a role to play in formative events in ovule and embryo morphogenesis. This chain is Homeobox protein knotted-1-like LET12 (LET12), found in Solanum lycopersicum (Tomato).